The primary structure comprises 1133 residues: Exportin-4 (1133 aa).

It belongs to the exportin family. In terms of assembly, interacts with Ran and cargo proteins in a GTP-dependent manner.

It is found in the cytoplasm. Its subcellular location is the nucleus. Its function is as follows. Mediates the nuclear export of proteins (cargos). In the nucleus binds cooperatively to its cargo and to the GTPase Ran in its active GTP-bound form. Docking of this trimeric complex to the nuclear pore complex (NPC) is mediated through binding to nucleoporins. Upon transit of a nuclear export complex into the cytoplasm, disassembling of the complex and hydrolysis of Ran-GTP to Ran-GDP cause release of the cargo from the export receptor. Xpo4 then return to the nuclear compartment and mediate another round of transport. The directionality of nuclear export is thought to be conferred by an asymmetric distribution of the GTP- and GDP-bound forms of Ran between the cytoplasm and nucleus. This is Exportin-4 (xpo4) from Dictyostelium discoideum (Social amoeba).